A 424-amino-acid polypeptide reads, in one-letter code: Glutamyl-tRNA reductase (424 aa).

Substrate is bound by residues 49 to 52, S107, 112 to 114, and Q118; these read TCNR and EPQ. The active-site Nucleophile is C50. An NADP(+)-binding site is contributed by 187–192; that stretch reads GAGETI.

It belongs to the glutamyl-tRNA reductase family. In terms of assembly, homodimer.

It carries out the reaction (S)-4-amino-5-oxopentanoate + tRNA(Glu) + NADP(+) = L-glutamyl-tRNA(Glu) + NADPH + H(+). It functions in the pathway porphyrin-containing compound metabolism; protoporphyrin-IX biosynthesis; 5-aminolevulinate from L-glutamyl-tRNA(Glu): step 1/2. In terms of biological role, catalyzes the NADPH-dependent reduction of glutamyl-tRNA(Glu) to glutamate 1-semialdehyde (GSA). The sequence is that of Glutamyl-tRNA reductase from Chromohalobacter salexigens (strain ATCC BAA-138 / DSM 3043 / CIP 106854 / NCIMB 13768 / 1H11).